The following is a 552-amino-acid chain: MAPASSNPGPYSLPDKDEVQLSAEDDWTRVKDRKEKKRIQNRVAQRSYRSRMKARLGELQSRLQAHEEQKAKEEAERCDPSPPSPPSSSATGLHLHTTPPSGNNAGANDTEPSSINSASPPTPPDVVGDLDPSQHAKAIDQFSHQMDMAGNDDSQWFLDSTSLLQHGDTSSYIQPSVPTPPVSLSQCPPMPAYMPEGPRNPNDGPASLSQSILQDCLRFQIQLLAKINNPSEATSTTHKEEGSAAKSPGALQQSHWSSCATNPAAAAQNMMPSTNMARGNSFSVLPADFHNLDDMMELTSTGDLPNATWRPSQQFSGPETTPRSHNAENPTQQQSPINDDTPSTTQHGAVPDCYNAFVAKSSAQASSLGMEERLEAAIEGLEALGFTSVDSFAEAYYSSSFDESSHLAAEQSMSRKRRLPRMLSQILDSAQSWDPWDRRGLNEEVLRTAESLLVAEGKSMDEKSLEASISGLMQATEGSSKPTPPQQNVTGMKRVLQNELPNLWPVMMALAGGNRASRQRDRSNMVLAAILILHCSSKMTKQKLLEFLDVCL.

Disordered regions lie at residues 1–132 (MAPA…DLDP), 169–209 (TSSY…ASLS), 232–258 (EATS…HWSS), and 297–349 (ELTS…QHGA). Residues 31–55 (KDRKEKKRIQNRVAQRSYRSRMKAR) are basic motif. A bZIP domain is found at 31–76 (KDRKEKKRIQNRVAQRSYRSRMKARLGELQSRLQAHEEQKAKEEAE). The interval 56–63 (LGELQSRL) is leucine-zipper. Residues 64–79 (QAHEEQKAKEEAERCD) show a composition bias toward basic and acidic residues. Composition is skewed to polar residues over residues 98–119 (TPPS…NSAS) and 169–186 (TSSY…SLSQ). Residues 298–347 (LTSTGDLPNATWRPSQQFSGPETTPRSHNAENPTQQQSPINDDTPSTTQH) are compositionally biased toward polar residues.

It belongs to the bZIP family.

The protein resides in the nucleus. Transcription factor that regulates the expression of the gene cluster that mediates the biosynthesis of the lipopeptide antibiotics leucinostatins that show extensive biological activities, including antimalarial, antiviral, antibacterial, antifungal, and antitumor activities, as well as phytotoxic. All 20 genes in the cluster are up-regulated to some extent by lcsF, with the exception of lcsL and lcsP, which are down-regulated. In Purpureocillium lilacinum (Paecilomyces lilacinus), this protein is Transcription factor lcsF.